A 620-amino-acid polypeptide reads, in one-letter code: MKRINILDECTFNKIAAGEVVERPFSVVKELVENSIDAEAKNITVEVKNGGQDLIKVSDDGAGIYADDIQKAFLTHATSKILNIDDIFSLNTMGFRGEALPSIASISKILLKSKPLSETSGKEIYMEGGNFISFNDVGMNTGTTIKVTDLFYNVPARLKFLKSSSRESSLISDIIQRLSLANPDIAFKLINNGKTVLNTYGSGNLEDAIRVIYGKKTLENISYFESHSDIISVYGYIGNAELSRGSRNNQSIFVNKRYIKSGLITAAVENAFKSFLTINKFPFFVIFIDIFPEYIDVNVHPTKTEIKFKEDKIVFSFVFKTVHESIKKSLYKEFNEQIKEDVKEDNKEIIKENPSLFQNVEKVQIPIDLKSASMDIERKSLVNSVLCNENNIVKDNINKNIYIDTKENLSENKLKNILKENTEDMVSKLPDMKIIGQFDNTYILAESVKNLYIIDQHAAHEKILFETYRDKIKKDEVKSQLLLQPIVLELDSEDFSYYVDNKELFYKTGFNIEVFGENTINIREVPFIMGKPDINNLFMDIINNIKAMGSGETIEVKYDSIAMLACKSAVKAHDKLSKEEMEALINDLRFAKDPFNCPHGRPTIIKITSLELEKKFKRIQ.

It belongs to the DNA mismatch repair MutL/HexB family.

This protein is involved in the repair of mismatches in DNA. It is required for dam-dependent methyl-directed DNA mismatch repair. May act as a 'molecular matchmaker', a protein that promotes the formation of a stable complex between two or more DNA-binding proteins in an ATP-dependent manner without itself being part of a final effector complex. This is DNA mismatch repair protein MutL from Clostridium tetani (strain Massachusetts / E88).